The chain runs to 160 residues: Large ribosomal subunit protein eL21 (160 aa).

2 stretches are compositionally biased toward basic and acidic residues: residues 112 to 123 (NDQKKKEAKEKG) and 136 to 146 (REAHFVRTNGK). A disordered region spans residues 112–146 (NDQKKKEAKEKGTWVQLNGQPAPPREAHFVRTNGK).

The protein belongs to the eukaryotic ribosomal protein eL21 family. In terms of assembly, component of the large ribosomal subunit.

The protein localises to the cytoplasm. It localises to the cytosol. It is found in the endoplasmic reticulum. Its function is as follows. Component of the large ribosomal subunit. The ribosome is a large ribonucleoprotein complex responsible for the synthesis of proteins in the cell. The sequence is that of Large ribosomal subunit protein eL21 (Rpl21) from Rattus norvegicus (Rat).